The following is a 474-amino-acid chain: Adenosylhomocysteinase (474 aa).

Residues threonine 61, aspartate 136, and glutamate 196 each coordinate substrate. An NAD(+)-binding site is contributed by 197 to 199 (TTT). Residues lysine 226 and aspartate 230 each contribute to the substrate site. Residues asparagine 231, 260–265 (GYGDVG), glutamate 283, asparagine 318, 339–341 (IGH), and asparagine 384 each bind NAD(+).

The protein belongs to the adenosylhomocysteinase family. It depends on NAD(+) as a cofactor.

The protein localises to the cytoplasm. It catalyses the reaction S-adenosyl-L-homocysteine + H2O = L-homocysteine + adenosine. Its pathway is amino-acid biosynthesis; L-homocysteine biosynthesis; L-homocysteine from S-adenosyl-L-homocysteine: step 1/1. May play a key role in the regulation of the intracellular concentration of adenosylhomocysteine. This chain is Adenosylhomocysteinase, found in Ralstonia nicotianae (strain ATCC BAA-1114 / GMI1000) (Ralstonia solanacearum).